The sequence spans 263 residues: Rhomboid-like protease 3 (263 aa).

6 consecutive transmembrane segments (helical) span residues 37-57, 86-106, 121-141, 142-162, 189-209, and 231-251; these read KSIVWITVAQIIMYIISCVLS, VVTPLFLHATILHLVLNLVFI, KFLVTYFLSAIVGNLLSMLMQ, PWALSVGASTAGFGIIGGMAA, LIYFLSFGRTVDTFGHLGGFL, and VLFYGCSALCATILVVSPPLL. The active-site Nucleophile is the serine 150. Histidine 204 is a catalytic residue.

The protein belongs to the peptidase S54 family.

The protein resides in the membrane. It carries out the reaction Cleaves type-1 transmembrane domains using a catalytic dyad composed of serine and histidine that are contributed by different transmembrane domains.. Serine protease involved in intramembrane proteolysis and the subsequent release of polypeptides from their membrane anchors. This chain is Rhomboid-like protease 3 (ROM3), found in Toxoplasma gondii.